The primary structure comprises 212 residues: NAD(P)H-quinone oxidoreductase subunit K, chloroplastic (212 aa).

[4Fe-4S] cluster contacts are provided by C43, C44, C108, and C139.

This sequence belongs to the complex I 20 kDa subunit family. NDH is composed of at least 16 different subunits, 5 of which are encoded in the nucleus. It depends on [4Fe-4S] cluster as a cofactor.

The protein localises to the plastid. Its subcellular location is the chloroplast thylakoid membrane. The catalysed reaction is a plastoquinone + NADH + (n+1) H(+)(in) = a plastoquinol + NAD(+) + n H(+)(out). It carries out the reaction a plastoquinone + NADPH + (n+1) H(+)(in) = a plastoquinol + NADP(+) + n H(+)(out). NDH shuttles electrons from NAD(P)H:plastoquinone, via FMN and iron-sulfur (Fe-S) centers, to quinones in the photosynthetic chain and possibly in a chloroplast respiratory chain. The immediate electron acceptor for the enzyme in this species is believed to be plastoquinone. Couples the redox reaction to proton translocation, and thus conserves the redox energy in a proton gradient. This Phaseolus vulgaris (Kidney bean) protein is NAD(P)H-quinone oxidoreductase subunit K, chloroplastic.